The chain runs to 588 residues: Snake venom 5'-nucleotidase (588 aa).

The first 40 residues, 1 to 40, serve as a signal peptide directing secretion; that stretch reads MQTPKRRRGAQGCPRSSPSPPLLLLVGAVWFCAALSVAAG. Residues D51 and H53 each coordinate Zn(2+). A disulfide bond links C66 and C71. An N-linked (GlcNAc...) asparagine glycan is attached at N88. Zn(2+)-binding residues include D99 and N131. N-linked (GlcNAc...) asparagine glycosylation occurs at N167. Positions 234 and 257 each coordinate Zn(2+). Residues N327, N347, and N361 are each glycosylated (N-linked (GlcNAc...) asparagine). 2 cysteine pairs are disulfide-bonded: C367–C372 and C379–C401. Residue R368 participates in AMP binding. N404 and R409 together coordinate AMP. An N-linked (GlcNAc...) asparagine glycan is attached at N418. F432 contacts AMP. C491 and C494 form a disulfide bridge. AMP-binding residues include F515 and D521. N-linked (GlcNAc...) asparagine glycosylation occurs at N532. S564 carries GPI-anchor amidated serine lipidation. Positions 565–588 are cleaved as a propeptide — removed in mature form; that stretch reads AGTLFQAQLFLTWGLCISLLYFIL.

This sequence belongs to the 5'-nucleotidase family. The cofactor is Zn(2+). Venom 5'-nucleotidases (or a part thereof) may be released into the venom via exosome-like vesicles. They may be attached via a GPI anchor to the membrane of these vesicles. Soluble forms of 5'-nucleotidase might be released by cleavage of the ectodomain in the exosome-like vesicles or venom gland cells. Expressed by the venom gland.

It is found in the membrane. It catalyses the reaction a ribonucleoside 5'-phosphate + H2O = a ribonucleoside + phosphate. In terms of biological role, hydrolyzes nucleotides into nucleosides. Snake venom 5'-nucleotidases are widely distributed among venomous snake taxa, but there is a lack of information about their biological activities. They have been shown to inhibit platelet aggregation. This effect may be due to the liberation of inhibitory AMP or adenosine by its action on ADP released upon initiation of aggregation. Venom 5'-nucleotidases are also known to synergistically act in vivo with other toxins like ADPases, phospholipases, and disintegrins to exert a more pronounced anti-coagulant effect. This chain is Snake venom 5'-nucleotidase, found in Gloydius brevicauda (Korean slamosa snake).